The sequence spans 324 residues: Quinolinate synthase (324 aa).

Residues H39 and S56 each coordinate iminosuccinate. [4Fe-4S] cluster is bound at residue C101. Iminosuccinate is bound by residues 127 to 129 and S144; that span reads YIN. C187 is a binding site for [4Fe-4S] cluster. Residues 213 to 215 and T230 each bind iminosuccinate; that span reads HPE. C280 contributes to the [4Fe-4S] cluster binding site.

This sequence belongs to the quinolinate synthase family. Type 2 subfamily. [4Fe-4S] cluster serves as cofactor.

It localises to the cytoplasm. The catalysed reaction is iminosuccinate + dihydroxyacetone phosphate = quinolinate + phosphate + 2 H2O + H(+). The protein operates within cofactor biosynthesis; NAD(+) biosynthesis; quinolinate from iminoaspartate: step 1/1. Functionally, catalyzes the condensation of iminoaspartate with dihydroxyacetone phosphate to form quinolinate. The polypeptide is Quinolinate synthase (Nostoc sp. (strain PCC 7120 / SAG 25.82 / UTEX 2576)).